We begin with the raw amino-acid sequence, 457 residues long: UDP-glucosyltransferase 45 (457 aa).

His21 (proton acceptor) is an active-site residue. His21 is a binding site for an anthocyanidin. The active-site Charge relay is the Asp112. UDP-alpha-D-glucose contacts are provided by Thr134, Gln336, His351, Trp354, Asn355, Ser356, Glu359, Asp375, and Gln376.

It belongs to the UDP-glycosyltransferase family.

The enzyme catalyses (20S)-protopanaxadiol + UDP-alpha-D-glucose = (20S)-ginsenoside Rh2 + UDP + H(+). It functions in the pathway secondary metabolite biosynthesis; terpenoid biosynthesis. Its function is as follows. Component of the triterpene saponins (e.g. PPD-type ginsenosides) biosynthetic pathway. Glycosyltransferase that catalyzes the biosynthesis of ginsenoside Rh2 from protopanaxadiol (PPD). This chain is UDP-glucosyltransferase 45, found in Panax ginseng (Korean ginseng).